Reading from the N-terminus, the 344-residue chain is Aspartate carbamoyltransferase catalytic subunit (344 aa).

Positions methionine 1 to aspartate 30 are disordered. 2 residues coordinate carbamoyl phosphate: arginine 88 and threonine 89. Residue lysine 116 participates in L-aspartate binding. Carbamoyl phosphate contacts are provided by arginine 138, histidine 166, and glutamine 169. L-aspartate-binding residues include arginine 199 and arginine 253. Residues glycine 294 and proline 295 each contribute to the carbamoyl phosphate site.

It belongs to the aspartate/ornithine carbamoyltransferase superfamily. ATCase family. In terms of assembly, heterododecamer (2C3:3R2) of six catalytic PyrB chains organized as two trimers (C3), and six regulatory PyrI chains organized as three dimers (R2).

The enzyme catalyses carbamoyl phosphate + L-aspartate = N-carbamoyl-L-aspartate + phosphate + H(+). Its pathway is pyrimidine metabolism; UMP biosynthesis via de novo pathway; (S)-dihydroorotate from bicarbonate: step 2/3. Functionally, catalyzes the condensation of carbamoyl phosphate and aspartate to form carbamoyl aspartate and inorganic phosphate, the committed step in the de novo pyrimidine nucleotide biosynthesis pathway. The protein is Aspartate carbamoyltransferase catalytic subunit of Sphingopyxis alaskensis (strain DSM 13593 / LMG 18877 / RB2256) (Sphingomonas alaskensis).